Reading from the N-terminus, the 293-residue chain is Pyridoxal 5'-phosphate synthase subunit PdxS (293 aa).

D23 provides a ligand contact to D-ribose 5-phosphate. K80 acts as the Schiff-base intermediate with D-ribose 5-phosphate in catalysis. Position 152 (G152) interacts with D-ribose 5-phosphate. R164 is a D-glyceraldehyde 3-phosphate binding site. D-ribose 5-phosphate-binding positions include G213 and 234–235; that span reads GS.

It belongs to the PdxS/SNZ family. In terms of assembly, in the presence of PdxT, forms a dodecamer of heterodimers.

The catalysed reaction is aldehydo-D-ribose 5-phosphate + D-glyceraldehyde 3-phosphate + L-glutamine = pyridoxal 5'-phosphate + L-glutamate + phosphate + 3 H2O + H(+). The protein operates within cofactor biosynthesis; pyridoxal 5'-phosphate biosynthesis. Functionally, catalyzes the formation of pyridoxal 5'-phosphate from ribose 5-phosphate (RBP), glyceraldehyde 3-phosphate (G3P) and ammonia. The ammonia is provided by the PdxT subunit. Can also use ribulose 5-phosphate and dihydroxyacetone phosphate as substrates, resulting from enzyme-catalyzed isomerization of RBP and G3P, respectively. The polypeptide is Pyridoxal 5'-phosphate synthase subunit PdxS (Roseiflexus castenholzii (strain DSM 13941 / HLO8)).